We begin with the raw amino-acid sequence, 320 residues long: BTB and MATH domain-containing protein 36 (320 aa).

Residues 7–136 (KGSIRFEIQN…DKHAVLEVQI (130 aa)) enclose the MATH domain. Residues 160–227 (TDVVLVLEGK…IYPTHMLINS (68 aa)) enclose the BTB domain.

This Caenorhabditis elegans protein is BTB and MATH domain-containing protein 36 (bath-36).